Here is a 1212-residue protein sequence, read N- to C-terminus: DNA-directed RNA polymerase subunit beta (1212 aa).

Residues 1176–1195 (QQEKKKLAEEAAKKDDKSAE) show a composition bias toward basic and acidic residues. The segment at 1176–1212 (QQEKKKLAEEAAKKDDKSAEPVDQSDSSTSSDDKVSK) is disordered.

Belongs to the RNA polymerase beta chain family. The RNAP catalytic core consists of 2 alpha, 1 beta, 1 beta' and 1 omega subunit. When a sigma factor is associated with the core the holoenzyme is formed, which can initiate transcription.

The enzyme catalyses RNA(n) + a ribonucleoside 5'-triphosphate = RNA(n+1) + diphosphate. DNA-dependent RNA polymerase catalyzes the transcription of DNA into RNA using the four ribonucleoside triphosphates as substrates. The sequence is that of DNA-directed RNA polymerase subunit beta from Lactobacillus gasseri (strain ATCC 33323 / DSM 20243 / BCRC 14619 / CIP 102991 / JCM 1131 / KCTC 3163 / NCIMB 11718 / NCTC 13722 / AM63).